The primary structure comprises 226 residues: 7-cyano-7-deazaguanine synthase (226 aa).

Position 11–21 (Leu-11–Leu-21) interacts with ATP. Cys-191, Cys-201, Cys-204, and Cys-207 together coordinate Zn(2+).

Belongs to the QueC family. Zn(2+) is required as a cofactor.

The catalysed reaction is 7-carboxy-7-deazaguanine + NH4(+) + ATP = 7-cyano-7-deazaguanine + ADP + phosphate + H2O + H(+). It participates in purine metabolism; 7-cyano-7-deazaguanine biosynthesis. In terms of biological role, catalyzes the ATP-dependent conversion of 7-carboxy-7-deazaguanine (CDG) to 7-cyano-7-deazaguanine (preQ(0)). The sequence is that of 7-cyano-7-deazaguanine synthase from Aromatoleum aromaticum (strain DSM 19018 / LMG 30748 / EbN1) (Azoarcus sp. (strain EbN1)).